We begin with the raw amino-acid sequence, 269 residues long: Phosphate import ATP-binding protein PstB 2 (269 aa).

The ABC transporter domain occupies 23-264; the sequence is LHTEDLHVFY…PKIQATEDYV (242 aa). 55 to 62 provides a ligand contact to ATP; the sequence is GPSGCGKS.

The protein belongs to the ABC transporter superfamily. Phosphate importer (TC 3.A.1.7) family. In terms of assembly, the complex is composed of two ATP-binding proteins (PstB), two transmembrane proteins (PstC and PstA) and a solute-binding protein (PstS).

The protein resides in the cell membrane. It carries out the reaction phosphate(out) + ATP + H2O = ADP + 2 phosphate(in) + H(+). In terms of biological role, part of the ABC transporter complex PstSACB involved in phosphate import. Responsible for energy coupling to the transport system. This chain is Phosphate import ATP-binding protein PstB 2, found in Enterococcus faecalis (strain ATCC 700802 / V583).